Consider the following 142-residue polypeptide: FAD synthase (142 aa).

Residues 9 to 10 (TF), 14 to 17 (HPGH), Asp-92, and Tyr-119 contribute to the ATP site.

Belongs to the archaeal FAD synthase family. In terms of assembly, homodimer. It depends on a divalent metal cation as a cofactor.

It catalyses the reaction FMN + ATP + H(+) = FAD + diphosphate. Its pathway is cofactor biosynthesis; FAD biosynthesis; FAD from FMN: step 1/1. In terms of biological role, catalyzes the transfer of the AMP portion of ATP to flavin mononucleotide (FMN) to produce flavin adenine dinucleotide (FAD) coenzyme. The chain is FAD synthase from Halorhabdus utahensis (strain DSM 12940 / JCM 11049 / AX-2).